A 126-amino-acid polypeptide reads, in one-letter code: Protein FMP49, mitochondrial (126 aa).

The protein resides in the mitochondrion. In Saccharomyces cerevisiae (strain ATCC 204508 / S288c) (Baker's yeast), this protein is Protein FMP49, mitochondrial.